Here is a 488-residue protein sequence, read N- to C-terminus: 3-octaprenyl-4-hydroxybenzoate carboxy-lyase (488 aa).

Asparagine 172 contributes to the Mn(2+) binding site. Residues 175 to 177 (IYR), 189 to 191 (RWL), and 194 to 195 (RG) contribute to the prenylated FMN site. Glutamate 238 contributes to the Mn(2+) binding site. Residue aspartate 287 is the Proton donor of the active site.

This sequence belongs to the UbiD family. As to quaternary structure, homohexamer. It depends on prenylated FMN as a cofactor. Requires Mn(2+) as cofactor.

It is found in the cell membrane. It carries out the reaction a 4-hydroxy-3-(all-trans-polyprenyl)benzoate + H(+) = a 2-(all-trans-polyprenyl)phenol + CO2. Its pathway is cofactor biosynthesis; ubiquinone biosynthesis. Its function is as follows. Catalyzes the decarboxylation of 3-octaprenyl-4-hydroxy benzoate to 2-octaprenylphenol, an intermediate step in ubiquinone biosynthesis. This Pseudomonas savastanoi pv. phaseolicola (strain 1448A / Race 6) (Pseudomonas syringae pv. phaseolicola (strain 1448A / Race 6)) protein is 3-octaprenyl-4-hydroxybenzoate carboxy-lyase.